A 221-amino-acid chain; its full sequence is GTP-binding nuclear protein Ran2 (221 aa).

The 165-residue stretch at Asp10–Asp174 folds into the Small GTPase Ran-type domain. Asp21 to Thr28 contributes to the GTP binding site. The segment at Lys40–Val48 is switch-I. Residues Gly71, Asn125 to Asp128, and Ser153 to Lys155 contribute to the GTP site. The interval Gly71–Gln87 is switch-II.

The protein belongs to the small GTPase superfamily. Ran family. As to quaternary structure, found in a nuclear export complex with RanGTP, exportin and pre-miRNA.

The protein resides in the nucleus. GTP-binding protein involved in nucleocytoplasmic transport. Required for the import of protein into the nucleus and also for RNA export. Involved in chromatin condensation and control of cell cycle. This Solanum lycopersicum (Tomato) protein is GTP-binding nuclear protein Ran2 (RAN2).